A 210-amino-acid chain; its full sequence is 3-hydroxy-3-methylglutaryl-coenzyme A reductase 2 (210 aa).

Active-site charge relay system residues include Lys21 and Asp97. The helical transmembrane segment at 166 to 186 (LLATIVAGSVLAGELSLMSAI) threads the bilayer. The active-site Proton donor is His195. N-linked (GlcNAc...) asparagine glycosylation occurs at Asn199.

Belongs to the HMG-CoA reductase family.

Its subcellular location is the endoplasmic reticulum membrane. It localises to the mitochondrion membrane. The protein localises to the plastid membrane. It carries out the reaction (R)-mevalonate + 2 NADP(+) + CoA = (3S)-3-hydroxy-3-methylglutaryl-CoA + 2 NADPH + 2 H(+). The protein operates within metabolic intermediate biosynthesis; (R)-mevalonate biosynthesis; (R)-mevalonate from acetyl-CoA: step 3/3. In terms of biological role, catalyzes the synthesis of mevalonate. The specific precursor of all isoprenoid compounds present in plants. This chain is 3-hydroxy-3-methylglutaryl-coenzyme A reductase 2 (HMGR2), found in Hevea brasiliensis (Para rubber tree).